The sequence spans 257 residues: uncharacterized protein (257 aa).

Gly-7–Thr-14 contributes to the ATP binding site.

This sequence to M.jannaschii MJ0084 and MJ0685.

This is an uncharacterized protein from Methanocaldococcus jannaschii (strain ATCC 43067 / DSM 2661 / JAL-1 / JCM 10045 / NBRC 100440) (Methanococcus jannaschii).